We begin with the raw amino-acid sequence, 533 residues long: Probable galacturonosyltransferase 13 (533 aa).

The Cytoplasmic segment spans residues 1–40 (MQLHISPSMRSITISSSNEFIDLMKIKVAARHISYRTLFH). The chain crosses the membrane as a helical; Signal-anchor for type II membrane protein span at residues 41-61 (TILILAFLLPFVFILTAVVTL). At 62–533 (EGVNKCSSFD…DFIKNCHILE (472 aa)) the chain is on the lumenal side. Asn306, Asn396, Asn445, and Asn520 each carry an N-linked (GlcNAc...) asparagine glycan.

It belongs to the glycosyltransferase 8 family. As to expression, expressed in roots, inflorescences, siliques, leaves and stems. Accumulates in pollen grains.

It is found in the golgi apparatus membrane. Its pathway is glycan metabolism; pectin biosynthesis. In terms of biological role, may be involved in pectin and/or xylans biosynthesis in cell walls. Together with GAUT14, required for pollen tube growth, possibly through the regulation of pectin biosynthesis and repartition in the pollen tube wall. This is Probable galacturonosyltransferase 13 from Arabidopsis thaliana (Mouse-ear cress).